Reading from the N-terminus, the 318-residue chain is Ribosomal RNA small subunit methyltransferase H (318 aa).

Residues 34-36, aspartate 57, leucine 91, aspartate 110, and glutamine 117 contribute to the S-adenosyl-L-methionine site; that span reads GGH.

Belongs to the methyltransferase superfamily. RsmH family.

Its subcellular location is the cytoplasm. It catalyses the reaction cytidine(1402) in 16S rRNA + S-adenosyl-L-methionine = N(4)-methylcytidine(1402) in 16S rRNA + S-adenosyl-L-homocysteine + H(+). In terms of biological role, specifically methylates the N4 position of cytidine in position 1402 (C1402) of 16S rRNA. The chain is Ribosomal RNA small subunit methyltransferase H from Chlorobaculum parvum (strain DSM 263 / NCIMB 8327) (Chlorobium vibrioforme subsp. thiosulfatophilum).